The primary structure comprises 194 residues: NAD(P)H:quinone oxidoreductase (194 aa).

It belongs to the SsuE family. As to quaternary structure, homotetramer. FMN is required as a cofactor.

It carries out the reaction a quinone + NADH + H(+) = a quinol + NAD(+). The enzyme catalyses a quinone + NADPH + H(+) = a quinol + NADP(+). The enzyme apparently serves as a quinone reductase in connection with conjugation reactions of hydroquinones involved in detoxification pathways. This Solanum tuberosum (Potato) protein is NAD(P)H:quinone oxidoreductase.